The following is a 76-amino-acid chain: MQTVLFALLRFYKIAVSPMLGNRCRFYPSCSDYAREAIQYHGAARGTYLAARRLCRCHPFSAGGIDLVPPPTPKKR.

Belongs to the UPF0161 family.

The protein resides in the cell inner membrane. Could be involved in insertion of integral membrane proteins into the membrane. The polypeptide is Putative membrane protein insertion efficiency factor (Paraburkholderia phymatum (strain DSM 17167 / CIP 108236 / LMG 21445 / STM815) (Burkholderia phymatum)).